The sequence spans 364 residues: Fructose-bisphosphate aldolase B (364 aa).

Ala-2 carries the N-acetylalanine modification. Lys-13 is subject to N6-succinyllysine. A Phosphoserine modification is found at Ser-36. Thr-39 bears the Phosphothreonine mark. Arg-43 provides a ligand contact to beta-D-fructose 1,6-bisphosphate. At Ser-89 the chain carries Phosphoserine. Phosphothreonine is present on Thr-119. Lys-121 carries the post-translational modification N6-succinyllysine. Ser-132 carries the post-translational modification Phosphoserine. The active-site Proton acceptor is Glu-188. Lys-230 acts as the Schiff-base intermediate with dihydroxyacetone-P in catalysis. 4 positions are modified to phosphoserine: Ser-272, Ser-276, Ser-299, and Ser-301. 272-274 is a binding site for beta-D-fructose 1,6-bisphosphate; the sequence is SGG. Residue Arg-304 participates in beta-D-fructose 1,6-bisphosphate binding. Ser-309 carries the post-translational modification Phosphoserine. Lys-317 is subject to N6-succinyllysine.

It belongs to the class I fructose-bisphosphate aldolase family. In terms of assembly, homotetramer. Interacts with BBS1, BBS2, BBS4 and BBS7. Forms a ternary complex with G6PD and TP53; this interaction is direct.

Its subcellular location is the cytoplasm. It is found in the cytosol. The protein resides in the cytoskeleton. It localises to the microtubule organizing center. The protein localises to the centrosome. Its subcellular location is the centriolar satellite. It catalyses the reaction beta-D-fructose 1,6-bisphosphate = D-glyceraldehyde 3-phosphate + dihydroxyacetone phosphate. It carries out the reaction beta-D-fructose 1-phosphate = D-glyceraldehyde + dihydroxyacetone phosphate. It functions in the pathway carbohydrate degradation; glycolysis; D-glyceraldehyde 3-phosphate and glycerone phosphate from D-glucose: step 4/4. Its pathway is carbohydrate biosynthesis; gluconeogenesis. The protein operates within carbohydrate metabolism; fructose metabolism. Its function is as follows. Catalyzes the aldol cleavage of fructose 1,6-biphosphate to form two triosephosphates dihydroxyacetone phosphate and D-glyceraldehyde 3-phosphate in glycolysis as well as the reverse stereospecific aldol addition reaction in gluconeogenesis. In fructolysis, metabolizes fructose 1-phosphate derived from the phosphorylation of dietary fructose by fructokinase into dihydroxyacetone phosphate and D-glyceraldehyde. Acts as an adapter independently of its enzymatic activity, exerts a tumor suppressor role by stabilizing the ternary complex with G6PD and TP53 to inhibit G6PD activity and keep oxidative pentose phosphate metabolism in check. The sequence is that of Fructose-bisphosphate aldolase B from Homo sapiens (Human).